The following is a 422-amino-acid chain: Lactose-binding protein (422 aa).

An N-terminal signal peptide occupies residues 1–28 (MDYSRLLKRSVSAALTAAALLCSTAAFA). Positions 246-277 (SNDGIRALTSGDVASVLRGVWITGTVKSQPDQ) are lactose-binding.

It belongs to the bacterial solute-binding protein 1 family.

It is found in the periplasm. In terms of biological role, part of the binding-protein-dependent transport system for lactose. This is Lactose-binding protein (lacE) from Rhizobium radiobacter (Agrobacterium tumefaciens).